Here is a 376-residue protein sequence, read N- to C-terminus: S-adenosylmethionine synthase (376 aa).

Residue His-14 coordinates ATP. A Mg(2+)-binding site is contributed by Asp-16. Glu-42 contributes to the K(+) binding site. Glu-55 and Gln-98 together coordinate L-methionine. The tract at residues 98–108 (QSPEIALGISS) is flexible loop. Residues 158-160 (DGK), 224-225 (RF), Asp-233, 239-240 (RK), Ala-256, and Lys-260 contribute to the ATP site. Asp-233 contributes to the L-methionine binding site. Lys-264 is a binding site for L-methionine.

It belongs to the AdoMet synthase family. In terms of assembly, homotetramer; dimer of dimers. The cofactor is Mg(2+). K(+) is required as a cofactor.

The protein resides in the cytoplasm. It carries out the reaction L-methionine + ATP + H2O = S-adenosyl-L-methionine + phosphate + diphosphate. The protein operates within amino-acid biosynthesis; S-adenosyl-L-methionine biosynthesis; S-adenosyl-L-methionine from L-methionine: step 1/1. Its function is as follows. Catalyzes the formation of S-adenosylmethionine (AdoMet) from methionine and ATP. The overall synthetic reaction is composed of two sequential steps, AdoMet formation and the subsequent tripolyphosphate hydrolysis which occurs prior to release of AdoMet from the enzyme. The protein is S-adenosylmethionine synthase of Aquifex aeolicus (strain VF5).